Reading from the N-terminus, the 1028-residue chain is Collagen alpha-1(VI) chain (1028 aa).

Positions 1–19 (MRAARALLPLLLQACWTAA) are cleaved as a signal peptide. The segment at 20-256 (QDEPETPRAV…CCSFECQPAR (237 aa)) is N-terminal globular domain. Residues 37-235 (DLFFVLDTSE…EAISQTIDTI (199 aa)) form the VWFA 1 domain. N-linked (GlcNAc...) asparagine glycosylation occurs at asparagine 212. A disordered region spans residues 254–590 (PARGPPGLRG…GPPGHQGPPG (337 aa)). Residues 257–592 (GPPGLRGDPG…PGHQGPPGPD (336 aa)) are triple-helical region. A Cell attachment site motif is present at residues 262–264 (RGD). Basic and acidic residues-rich tracts occupy residues 268–285 (EGER…EAGD) and 301–334 (KGEK…DGVK). The span at 384-394 (RPGSSGPSGDE) shows a compositional bias: low complexity. Residues 442-444 (RGD) carry the Cell attachment site motif. Residues 457–471 (EGPVGVPGDPGEAGP) are compositionally biased toward low complexity. The Cell attachment site motif lies at 478 to 480 (RGD). The segment covering 483–493 (PPGSEGARGAP) has biased composition (low complexity). N-linked (GlcNAc...) asparagine glycans are attached at residues asparagine 516 and asparagine 537. Acidic residues predominate over residues 550–560 (GEAGDPGDDNN). Residues 579-590 (PQGPPGHQGPPG) are compositionally biased toward pro residues. The interval 593–1028 (ECEILDIIMK…QTVSRKVALG (436 aa)) is C-terminal globular domain. VWFA domains follow at residues 615–805 (DLLF…LKNV) and 829–1021 (DITI…HQTV). 2 N-linked (GlcNAc...) asparagine glycosylation sites follow: asparagine 804 and asparagine 896.

Belongs to the type VI collagen family. Trimers composed of three different chains: alpha-1(VI), alpha-2(VI), and alpha-3(VI) or alpha-5(VI) or alpha-6(VI). In terms of processing, prolines at the third position of the tripeptide repeating unit (G-X-Y) are hydroxylated in some or all of the chains.

It is found in the secreted. The protein localises to the extracellular space. It localises to the extracellular matrix. Collagen VI acts as a cell-binding protein. The chain is Collagen alpha-1(VI) chain (COL6A1) from Homo sapiens (Human).